The following is a 197-amino-acid chain: MEITKKPKIKSIPYDEFIDNESLEKLVKELNTGGANVFLGVLDDLVNWGRSNSLWPLTFATSCCGIEFMALGAARYDMARFGFEVARASPRQADMIMVCGTITNKMAPVLKRLYDQMPDPKYVVAVGGCAVSGGPFKKSYHVLNGVDKILPVDVYIPGCPPRPEAFYYGMMQLQRKVKIEKFFGGTNRKEKKPEFMK.

The [4Fe-4S] cluster site is built by cysteine 63, cysteine 64, cysteine 129, and cysteine 159.

This sequence belongs to the complex I 20 kDa subunit family. As to quaternary structure, NDH-1 is composed of 14 different subunits. Subunits NuoB, C, D, E, F, and G constitute the peripheral sector of the complex. The cofactor is [4Fe-4S] cluster.

It localises to the cell inner membrane. It carries out the reaction a quinone + NADH + 5 H(+)(in) = a quinol + NAD(+) + 4 H(+)(out). NDH-1 shuttles electrons from NADH, via FMN and iron-sulfur (Fe-S) centers, to quinones in the respiratory chain. The immediate electron acceptor for the enzyme in this species is believed to be a menaquinone. Couples the redox reaction to proton translocation (for every two electrons transferred, four hydrogen ions are translocated across the cytoplasmic membrane), and thus conserves the redox energy in a proton gradient. The chain is NADH-quinone oxidoreductase subunit B from Bacteroides thetaiotaomicron (strain ATCC 29148 / DSM 2079 / JCM 5827 / CCUG 10774 / NCTC 10582 / VPI-5482 / E50).